Here is a 469-residue protein sequence, read N- to C-terminus: ATP-dependent protease ATPase subunit HslU (469 aa).

ATP is bound by residues isoleucine 24, 66 to 71 (GVGKTE), aspartate 282, glutamate 347, and arginine 419.

It belongs to the ClpX chaperone family. HslU subfamily. A double ring-shaped homohexamer of HslV is capped on each side by a ring-shaped HslU homohexamer. The assembly of the HslU/HslV complex is dependent on binding of ATP.

The protein localises to the cytoplasm. Its function is as follows. ATPase subunit of a proteasome-like degradation complex; this subunit has chaperone activity. The binding of ATP and its subsequent hydrolysis by HslU are essential for unfolding of protein substrates subsequently hydrolyzed by HslV. HslU recognizes the N-terminal part of its protein substrates and unfolds these before they are guided to HslV for hydrolysis. The chain is ATP-dependent protease ATPase subunit HslU from Listeria monocytogenes serovar 1/2a (strain ATCC BAA-679 / EGD-e).